Consider the following 736-residue polypeptide: Ethylene receptor 2 (736 aa).

Transmembrane regions (helical) follow at residues Ile-22–Val-42, Val-53–Trp-73, and Ala-94–Val-114. Residues Cys-64 and His-68 each contribute to the Cu cation site. The GAF domain occupies Asp-157–Leu-305. The Histidine kinase domain maps to Val-348–Ile-585. His-351 carries the post-translational modification Phosphohistidine; by autocatalysis. Residues Lys-613 to Leu-730 form the Response regulatory domain. Asp-661 carries the 4-aspartylphosphate modification.

Belongs to the ethylene receptor family. In terms of assembly, homodimer; disulfide-linked. Cu cation is required as a cofactor. Activation probably requires a transfer of a phosphate group between a His in the transmitter domain and an Asp of the receiver domain. In terms of tissue distribution, leaves, flowers and fruits.

The protein localises to the endoplasmic reticulum membrane. It catalyses the reaction ATP + protein L-histidine = ADP + protein N-phospho-L-histidine.. In terms of biological role, may act early in the ethylene signal transduction pathway, possibly as an ethylene receptor, or as a regulator of the pathway. This is Ethylene receptor 2 (ETR2) from Solanum lycopersicum (Tomato).